The sequence spans 432 residues: MAPKKCPETQKSPDVAVLLRSKSRRGPQELEPEAKKLRVQGPVSSRTCESCCLLAELSSLQIPSRSSSIVRDLYQHKLGKATWSSLQQGLQKSFLHSLASYQVFRKAAPFDRRTTSLAWHPTHPSTLAVGSKGGDIMIWNFGIKDKPIFLKGIGAGGSITGLKFNHLNTNQFFASSMEGTTRLQDFKGNILRVYTSSNSCKVWFCSLDVSAKSRVVVTGDNMGHVILLSTDGKELWNLRMHKKKVAHVALNPCCDWLLATASIDQTVKIWDLRQIKGKDSFLYSLPHRHPVNAACFSPDGARLLTTDQNNEIRVYSASQWDSPLNLISHPHRHFQHLTPIKATWHSRHNLIVVGRYPDPNLKSCVPYELRTIDVFDGSSGKMMCQLYDPGYSGITSLNEFNPMGDTLASTMGYHILIWSQEEDGSQKDHERL.

The disordered stretch occupies residues 1–31; it reads MAPKKCPETQKSPDVAVLLRSKSRRGPQELE. N6-acetyllysine is present on residues Lys35 and Lys77. Required for interaction with DDB1 regions lie at residues 68-79 and 87-98; these read SIVRDLYQHKLG and QQGLQKSFLHSL. 5 WD repeats span residues 116–151, 159–194, 203–238, 244–287, and 290–329; these read SLAW…IFLK, ITGL…LRVY, WFCS…LWNL, KVAH…SLPH, and PVNA…LISH. A DWD box motif is present at residues 256–274; that stretch reads WLLATASIDQTVKIWDLRQ. A photolesion recognition region spans residues 334 to 336; sequence FQH. 2 WD repeats span residues 343–386 and 396–420; these read TWHS…MCQL and SLNE…IWSQ.

Belongs to the WD repeat DDB2/WDR76 family. Component of the UV-DDB complex which includes DDB1 and DDB2. The UV-DDB complex interacts with monoubiquitinated histone H2A and binds to XPC via the DDB2 subunit. Component of the DCX (DDB1-CUL4-X-box) E3 ubiquitin-protein ligase complex DDB1-CUL4-ROC1 (also known as CUL4-DDB-ROC1 and CUL4-DDB-RBX1), which includes CUL4A or CUL4B, DDB1, DDB2 and RBX1. DDB2 may function as the substrate recognition module within this complex. The DDB1-CUL4-ROC1 complex may associate with the COP9 signalosome, and this inhibits the E3 ubiquitin-protein ligase activity of the complex. A large number of other DCX complexes may also exist in which an alternate substrate targeting subunit replaces DDB2. These targeting subunits are generally known as DCAF (DDB1- and CUL4-associated factor) or CDW (CUL4-DDB1-associated WD40-repeat) proteins. Phosphorylation by ABL1 negatively regulate UV-DDB activity. Post-translationally, ubiquitinated by CUL4A in response to UV irradiation. Ubiquitination appears to both impair DNA-binding and promotes ubiquitin-dependent proteolysis. Degradation of DDB2 at sites of DNA damage may be a prerequisite for their recognition by XPC and subsequent repair. CUL4A-mediated degradation appears to be promoted by ABL1. In terms of processing, ubiquitinated, leading to proteasomal degradation, and deubiquitinated by USP24. Deubiquitinated by USP44; leading to its stabilization on DNA lesions. Acetylated. Deacetylation by SIRT6 in response to UV stress facilitates nucleotide excision repair pathway (the NER pathway) transduction. As to expression, expressed in bone marrow, liver, lung, muscle, pancreas and spleen.

The protein resides in the nucleus. Its subcellular location is the chromosome. The protein operates within protein modification; protein ubiquitination. Its function is as follows. Protein, which is both involved in DNA repair and protein ubiquitination, as part of the UV-DDB complex and DCX (DDB1-CUL4-X-box) complexes, respectively. Core component of the UV-DDB complex (UV-damaged DNA-binding protein complex), a complex that recognizes UV-induced DNA damage and recruit proteins of the nucleotide excision repair pathway (the NER pathway) to initiate DNA repair. The UV-DDB complex preferentially binds to cyclobutane pyrimidine dimers (CPD), 6-4 photoproducts (6-4 PP), apurinic sites and short mismatches. Also functions as the substrate recognition module for the DCX (DDB2-CUL4-X-box) E3 ubiquitin-protein ligase complex DDB2-CUL4-ROC1 (also known as CUL4-DDB-ROC1 and CUL4-DDB-RBX1). The DDB2-CUL4-ROC1 complex may ubiquitinate histone H2A, histone H3 and histone H4 at sites of UV-induced DNA damage. The ubiquitination of histones may facilitate their removal from the nucleosome and promote subsequent DNA repair. The DDB2-CUL4-ROC1 complex also ubiquitinates XPC, which may enhance DNA-binding by XPC and promote NER. The DDB2-CUL4-ROC1 complex also ubiquitinates KAT7/HBO1 in response to DNA damage, leading to its degradation: recognizes KAT7/HBO1 following phosphorylation by ATR. This Mus musculus (Mouse) protein is DNA damage-binding protein 2 (Ddb2).